The chain runs to 365 residues: Terpene cyclase DEP1 (365 aa).

The next 8 helical transmembrane spans lie at 10–30, 82–102, 116–136, 158–178, 188–208, 233–253, 297–317, and 338–358; these read LYLS…NGMF, LLFF…LIES, AWAM…IYLY, LPII…PAWF, ALIA…VGIT, LILA…GALF, LFSQ…AQLL, and MIYL…SFAL.

It belongs to the membrane-bound ascI terpene cyclase family.

It is found in the membrane. It functions in the pathway polyketide biosynthesis. Part of the gene cluster that mediates the biosynthesis of depudecin, a highly oxidized eleven-carbon linear polyketide that acts as a histone deacetylase (HDAC) inhibitor and makes a small contribution to pathogenesis. The reducing polyketide synthase DEP5 is the central enzyme in depudecin biosynthesis by yielding the backbone polyketide chain. The monooxygenases DEP2 and DEP4, as well as the uncharacterized protein DEP1, then act as tailoring enzymes to modify the intermediate polyketide chain into depudecin. The polypeptide is Terpene cyclase DEP1 (Fusarium langsethiae).